A 504-amino-acid polypeptide reads, in one-letter code: Maturase K (504 aa).

The protein belongs to the intron maturase 2 family. MatK subfamily.

Its subcellular location is the plastid. It is found in the chloroplast. Usually encoded in the trnK tRNA gene intron. Probably assists in splicing its own and other chloroplast group II introns. The chain is Maturase K from Hamamelis japonica (Japanese witch hazel).